The primary structure comprises 1328 residues: Protein turtle homolog B (1328 aa).

The N-terminal stretch at 1 to 17 (MIWYVATLIASVISTRG) is a signal peptide. Residues 18 to 722 (LVAQGAHGLR…DLTDDGLARP (705 aa)) are Extracellular-facing. Ig-like domains are found at residues 30–115 (PEFV…ECKV), 139–226 (PTFT…LLVQ), 228–320 (PPFI…AYLT), 324–415 (PARV…ARLV), and 420–504 (PYFT…THLT). 2 cysteine pairs are disulfide-bonded: C45–C113 and C161–C208. 2 N-linked (GlcNAc...) asparagine glycosylation sites follow: N241 and N258. 3 cysteine pairs are disulfide-bonded: C250–C303, C346–C397, and C442–C488. 2 consecutive Fibronectin type-III domains span residues 512–604 (APGS…TLAF) and 614–708 (LVTP…STDI). The N-linked (GlcNAc...) asparagine glycan is linked to N624. Residues 723–743 (VLAGIVATICFLAAAILFSTL) form a helical membrane-spanning segment. At 744–1328 (AACFVNKQRK…EPPTTLPTSG (585 aa)) the chain is on the cytoplasmic side. 3 disordered regions span residues 758–817 (RKKD…EKEL), 914–1040 (PMSS…PEPW), and 1106–1328 (KSPG…PTSG). 3 positions are modified to phosphoserine: S775, S783, and S794. The segment covering 990–1001 (SPLSSVMSSPPL) has biased composition (low complexity). Polar residues-rich tracts occupy residues 1018–1033 (ENAS…TPTG), 1129–1141 (LVSQ…TSQG), and 1199–1214 (SRLS…SRTG). The residue at position 1136 (R1136) is an Omega-N-methylarginine. Phosphoserine is present on residues S1207 and S1215. Residues 1246-1273 (SFSRKSTPSSTGSPSQSSRSGSPSYRPT) show a composition bias toward low complexity. Composition is skewed to pro residues over residues 1284-1295 (PSPPPGPAPPAP) and 1318-1328 (PEPPTTLPTSG).

Belongs to the immunoglobulin superfamily. Turtle family. Found in a complex with MAGI2 and NLGN2, where it interacts with MAGI2 (via PDZ 5 and PDZ 6 domains). N-glycosylated and sialylated. Not significantly O-glycosylated. Detected in brain.

The protein localises to the cell membrane. It is found in the postsynaptic cell membrane. It localises to the postsynaptic density. In terms of biological role, transmembrane protein which is abundantly expressed in interneurons, where it may regulate inhibitory synapse development. May mediate homophilic cell adhesion. The sequence is that of Protein turtle homolog B from Mus musculus (Mouse).